The primary structure comprises 158 residues: Inner membrane assembly complex subunit 17 (158 aa).

A mitochondrion-targeting transit peptide spans 1-15; sequence MFRPLVKRVVTRRFL. The Mitochondrial matrix segment spans residues 16 to 85; it reads AAANNSNAHI…KTQETSLKKF (70 aa). A helical transmembrane segment spans residues 86 to 108; that stretch reads VRPAWIFLLMGSIVYLSCHYVWW. At 109–158 the chain is on the mitochondrial intermembrane side; the sequence is KLDYEEKELEYTHKVHQLESELAALNEAHNSSVSSDKNSKRSSRKWYKFW. Residues 110-140 adopt a coiled-coil conformation; the sequence is LDYEEKELEYTHKVHQLESELAALNEAHNSS.

Belongs to the INA17 family. Component of the inner membrane assembly (INA) complex, composed of INA17 and INA22. Interacts with a subset of F(1)F(0)-ATP synthase subunits of the F(1)-domain and the peripheral stalk.

It is found in the mitochondrion inner membrane. Its function is as follows. Component of the INA complex (INAC) that promotes the biogenesis of mitochondrial F(1)F(0)-ATP synthase. INAC facilitates the assembly of the peripheral stalk and promotes the assembly of the catalytic F(1)-domain with the membrane-embedded F(0)-domain. This is Inner membrane assembly complex subunit 17 from Kluyveromyces lactis (strain ATCC 8585 / CBS 2359 / DSM 70799 / NBRC 1267 / NRRL Y-1140 / WM37) (Yeast).